The sequence spans 380 residues: Cytochrome b (380 aa).

A run of 4 helical transmembrane segments spans residues 34–54 (FGSLLTICLLTQILTGLLLAM), 78–99 (WLIRNLHANGASFFFICIYLHI), 114–134 (WNTGVILLLTLMATAFVGYVL), and 179–199 (FFALHFLLPFMIVGLSMIHLT). The heme b site is built by His-84 and His-98. The heme b site is built by His-183 and His-197. An a ubiquinone-binding site is contributed by His-202. 4 consecutive transmembrane segments (helical) span residues 227 to 247 (LKDILGFILMLLPLTTLALFS), 289 to 309 (LGGVLALAASVLILFLAPFLH), 321 to 341 (ISQLLFWILVANLLILTWVGS), and 348 to 368 (FIIIGQLASITYFTILLILFP).

It belongs to the cytochrome b family. As to quaternary structure, the cytochrome bc1 complex contains 11 subunits: 3 respiratory subunits (MT-CYB, CYC1 and UQCRFS1), 2 core proteins (UQCRC1 and UQCRC2) and 6 low-molecular weight proteins (UQCRH/QCR6, UQCRB/QCR7, UQCRQ/QCR8, UQCR10/QCR9, UQCR11/QCR10 and a cleavage product of UQCRFS1). This cytochrome bc1 complex then forms a dimer. Heme b is required as a cofactor.

Its subcellular location is the mitochondrion inner membrane. Component of the ubiquinol-cytochrome c reductase complex (complex III or cytochrome b-c1 complex) that is part of the mitochondrial respiratory chain. The b-c1 complex mediates electron transfer from ubiquinol to cytochrome c. Contributes to the generation of a proton gradient across the mitochondrial membrane that is then used for ATP synthesis. This is Cytochrome b (MT-CYB) from Pelecanoides garnotii (Peruvian diving petrel).